The primary structure comprises 163 residues: IQ domain-containing protein F2 (163 aa).

IQ domains are found at residues 42-71 and 98-127; these read RVIA…STWI and RERA…AIYV.

The sequence is that of IQ domain-containing protein F2 (IQCF2) from Bos taurus (Bovine).